The primary structure comprises 322 residues: Tetraacyldisaccharide 4'-kinase (322 aa).

Residue 54-61 (SVGGTGKT) participates in ATP binding.

The protein belongs to the LpxK family.

It catalyses the reaction a lipid A disaccharide + ATP = a lipid IVA + ADP + H(+). The protein operates within glycolipid biosynthesis; lipid IV(A) biosynthesis; lipid IV(A) from (3R)-3-hydroxytetradecanoyl-[acyl-carrier-protein] and UDP-N-acetyl-alpha-D-glucosamine: step 6/6. In terms of biological role, transfers the gamma-phosphate of ATP to the 4'-position of a tetraacyldisaccharide 1-phosphate intermediate (termed DS-1-P) to form tetraacyldisaccharide 1,4'-bis-phosphate (lipid IVA). The chain is Tetraacyldisaccharide 4'-kinase from Francisella tularensis subsp. tularensis (strain FSC 198).